The following is a 360-amino-acid chain: MAIKRLINEHDMELWNNSKTFEDVIGFINTLALSVRGRENNDYTQPISDNVQRVSNLLSKVTEIIGKHEVIKDANTSRFGKIEFRDFYDDISEHSNELISKIFEGIEKPDTGKLDDICTYFINSWGDRSRIDYGSGHELNFICFLYCLTESKVFDLENDSSNIVLMLFIKYLGIMRSLELKYWLEPAGSHGVWGLDDYHFLPFLFGAFQLSTHKHLKPKSIHNPEVVEMFQDRYLYFGCIAFINKVKTTASLRWHSPMLDDISGVKRWSKVAEGMVKMYKAEVLQKLPIMQHFYFGYFLKCPEGVSEPSARAQDHHEDDSCCTDGSHGHSTWADCCGIAVPSAIAASQMANKDVRLFPFD.

The protein belongs to the PTPA-type PPIase family.

The protein resides in the cytoplasm. It carries out the reaction [protein]-peptidylproline (omega=180) = [protein]-peptidylproline (omega=0). Its function is as follows. PPIases accelerate the folding of proteins. It catalyzes the cis-trans isomerization of proline imidic peptide bonds in oligopeptides. Acts as a regulatory subunit for PP2A-like phosphatases modulating their activity or substrate specificity, probably by inducing a conformational change in the catalytic subunit, a direct target of the PPIase. Can reactivate inactive phosphatase PP2A-phosphatase methylesterase complexes (PP2Ai) in presence of ATP and Mg(2+) by dissociating the inactive form from the complex. The protein is Serine/threonine-protein phosphatase 2A activator 2 (RRD2) of Kluyveromyces lactis (strain ATCC 8585 / CBS 2359 / DSM 70799 / NBRC 1267 / NRRL Y-1140 / WM37) (Yeast).